Consider the following 629-residue polypeptide: MSSTENNGTAVPLQEFEYKAEMKQLLDLIIHSLYTHPEIYLRELISNASDALSKARFNALTDQDMLDKDAELAIRLTLNAEEKSVVIEDSGIGMTEEELIANLGTVAKSGTLGFMQSLKEQQQQLDGNLIGQFGVGFYSVFMVTEEVTVETRSFHSNAQGYRWRSSGQGTYTIEQIDKATRGTRISFKLKEEHQEFAEEYRVEQIIKKYSNFVDFPIYLGERQLNSMTALWQRPKSELKDEEVNEFYKFVASDFNDPLDYLSISVEGMVSFKALLFLPKEAPPELMYRQSELENRGPQLYVKKVLIQNECRDLLPEYLRFIAGVVDTEDLSLNVSREMVQSSPVMAKIRQILTGKILGWFEMLAKEQPEKFKTFYKAFGPIIKIGLNTDFTNREKLIELLRFESTKTEEGEFVTLREYVERMGSEQKEIYYHSGNNRAQLLAHPNIEYFREHGIEVLLLSDPVDMFVIPSIHEFDKKPLKSIEKADCDFSQQSSNKAEPVAPNLLNPVLQAFKEALSNEVEDVVESRRLVSSPVTLVSGKDAIDSQLERMMKMMNTPMPPAKRILEVNSSHPIVRNIAGMIMADANNPLIKTVARQLYEGALFLEGSLEDATSYVTRMNELIEAATLTR.

The segment at 1–336 (MSSTENNGTA…TEDLSLNVSR (336 aa)) is a; substrate-binding. The b stretch occupies residues 337–549 (EMVQSSPVMA…KDAIDSQLER (213 aa)). Positions 550-629 (MMKMMNTPMP…ELIEAATLTR (80 aa)) are c.

It belongs to the heat shock protein 90 family. As to quaternary structure, homodimer.

Its subcellular location is the cytoplasm. Functionally, molecular chaperone. Has ATPase activity. This chain is Chaperone protein HtpG, found in Chlorobium chlorochromatii (strain CaD3).